The following is a 327-amino-acid chain: Methionyl-tRNA formyltransferase (327 aa).

118-121 (SLLP) contacts (6S)-5,6,7,8-tetrahydrofolate.

It belongs to the Fmt family.

The enzyme catalyses L-methionyl-tRNA(fMet) + (6R)-10-formyltetrahydrofolate = N-formyl-L-methionyl-tRNA(fMet) + (6S)-5,6,7,8-tetrahydrofolate + H(+). In terms of biological role, attaches a formyl group to the free amino group of methionyl-tRNA(fMet). The formyl group appears to play a dual role in the initiator identity of N-formylmethionyl-tRNA by promoting its recognition by IF2 and preventing the misappropriation of this tRNA by the elongation apparatus. This is Methionyl-tRNA formyltransferase from Corynebacterium jeikeium (strain K411).